Consider the following 215-residue polypeptide: Probable transaldolase (215 aa).

K83 serves as the catalytic Schiff-base intermediate with substrate.

Belongs to the transaldolase family. Type 3B subfamily.

It localises to the cytoplasm. The enzyme catalyses D-sedoheptulose 7-phosphate + D-glyceraldehyde 3-phosphate = D-erythrose 4-phosphate + beta-D-fructose 6-phosphate. It participates in carbohydrate degradation; pentose phosphate pathway; D-glyceraldehyde 3-phosphate and beta-D-fructose 6-phosphate from D-ribose 5-phosphate and D-xylulose 5-phosphate (non-oxidative stage): step 2/3. Transaldolase is important for the balance of metabolites in the pentose-phosphate pathway. This chain is Probable transaldolase, found in Methanococcus vannielii (strain ATCC 35089 / DSM 1224 / JCM 13029 / OCM 148 / SB).